The sequence spans 385 residues: MKALHFGAGNIGRGFIGKLLADSGIQVIFADVNDHVIEQLKTQRAYPVKIVGDRLNVIETVSNVTGVNSKNEADIIACFTEVDLVTTAVGPNVLKIISSTIAKGLSARFRAGNTRPLNIIACENMVRGTSFLKDNVFSYLTPEEQQQAEAQIGFVDSAVDRIVPPVQFDPANPLLVTVEEFSEWIVDKTQFKGTIPAITGMEQTDNLMAFVERKLFTLNTGHATTAYLGKLKGHQFVKDSIDDPDIREAVKATMQESGAVLIKRYGFDPHAHAAYIEKILKRFANPYLQDDVDRVGREPLRKLSYNDRLIKPLRGTLEYGLPNQHLIQTIASALAYRNESDPQAVELAQLLQQDTLESAVKKITELTESNIVQQIVTAYNALQKN.

An NAD(+)-binding site is contributed by 3–14 (ALHFGAGNIGRG).

Belongs to the mannitol dehydrogenase family.

It carries out the reaction D-mannitol 1-phosphate + NAD(+) = beta-D-fructose 6-phosphate + NADH + H(+). The chain is Mannitol-1-phosphate 5-dehydrogenase from Pasteurella multocida (strain Pm70).